A 415-amino-acid polypeptide reads, in one-letter code: Tyrosine--tRNA ligase (415 aa).

Tyrosine 40 contributes to the L-tyrosine binding site. The 'HIGH' region motif lies at 45–54 (ATAKSLHVGS). Positions 178 and 182 each coordinate L-tyrosine. Residues 238-242 (KMGKS) carry the 'KMSKS' region motif. Lysine 241 serves as a coordination point for ATP. The region spanning 350–414 (ASIVQLIVKT…GKKRHALVQL (65 aa)) is the S4 RNA-binding domain.

This sequence belongs to the class-I aminoacyl-tRNA synthetase family. TyrS type 1 subfamily. As to quaternary structure, homodimer.

It localises to the cytoplasm. The catalysed reaction is tRNA(Tyr) + L-tyrosine + ATP = L-tyrosyl-tRNA(Tyr) + AMP + diphosphate + H(+). Catalyzes the attachment of tyrosine to tRNA(Tyr) in a two-step reaction: tyrosine is first activated by ATP to form Tyr-AMP and then transferred to the acceptor end of tRNA(Tyr). The polypeptide is Tyrosine--tRNA ligase (Ruegeria pomeroyi (strain ATCC 700808 / DSM 15171 / DSS-3) (Silicibacter pomeroyi)).